The sequence spans 251 residues: GTP cyclohydrolase 1 type 2 homolog (251 aa).

5 residues coordinate a divalent metal cation: His64, His65, Asp102, His219, and Glu223.

It belongs to the GTP cyclohydrolase I type 2/NIF3 family. Homohexamer.

This is GTP cyclohydrolase 1 type 2 homolog from Chlamydia pneumoniae (Chlamydophila pneumoniae).